Reading from the N-terminus, the 300-residue chain is Diphthine methyl ester synthase (300 aa).

Residues Leu9, Asp85, Gly88, 113-114 (SV), Leu164, Leu222, and His247 contribute to the S-adenosyl-L-methionine site.

Belongs to the diphthine synthase family.

The protein localises to the cytoplasm. The enzyme catalyses 2-[(3S)-amino-3-carboxypropyl]-L-histidyl-[translation elongation factor 2] + 4 S-adenosyl-L-methionine = diphthine methyl ester-[translation elongation factor 2] + 4 S-adenosyl-L-homocysteine + 3 H(+). Its pathway is protein modification; peptidyl-diphthamide biosynthesis. S-adenosyl-L-methionine-dependent methyltransferase that catalyzes four methylations of the modified target histidine residue in translation elongation factor 2 (EF-2), to form an intermediate called diphthine methyl ester. The four successive methylation reactions represent the second step of diphthamide biosynthesis. The protein is Diphthine methyl ester synthase (DPH5) of Yarrowia lipolytica (strain CLIB 122 / E 150) (Yeast).